A 119-amino-acid polypeptide reads, in one-letter code: Holo-[acyl-carrier-protein] synthase (119 aa).

The Mg(2+) site is built by Asp8 and Glu59.

This sequence belongs to the P-Pant transferase superfamily. AcpS family. It depends on Mg(2+) as a cofactor.

The protein localises to the cytoplasm. It carries out the reaction apo-[ACP] + CoA = holo-[ACP] + adenosine 3',5'-bisphosphate + H(+). Its function is as follows. Transfers the 4'-phosphopantetheine moiety from coenzyme A to a Ser of acyl-carrier-protein. The sequence is that of Holo-[acyl-carrier-protein] synthase from Streptococcus agalactiae serotype Ia (strain ATCC 27591 / A909 / CDC SS700).